Reading from the N-terminus, the 36-residue chain is Thrombin (36 aa).

Residues 19–36 enclose the Peptidase S1 domain; sequence IVKGIDAEVASAPMQVML.

The protein belongs to the peptidase S1 family. As to quaternary structure, forms a heterodimer with SERPINA5. Post-translationally, the gamma-carboxyglutamyl residues, which bind calcium ions, result from the carboxylation of glutamyl residues by a microsomal enzyme, the vitamin K-dependent carboxylase. The modified residues are necessary for the calcium-dependent interaction with a negatively charged phospholipid surface, which is essential for the conversion of prothrombin to thrombin. N-glycosylated. In terms of tissue distribution, expressed by the liver and secreted in plasma.

It localises to the secreted. The enzyme catalyses Selective cleavage of Arg-|-Gly bonds in fibrinogen to form fibrin and release fibrinopeptides A and B.. With respect to regulation, inhibited by SERPINA5. In terms of biological role, thrombin, which cleaves bonds after Arg and Lys, converts fibrinogen to fibrin and activates factors V, VII, VIII, XIII, and, in complex with thrombomodulin, protein C. Functions in blood homeostasis, inflammation and wound healing. The sequence is that of Thrombin from Salmo salar (Atlantic salmon).